The primary structure comprises 155 residues: Putative pre-16S rRNA nuclease (155 aa).

The protein belongs to the YqgF nuclease family.

It localises to the cytoplasm. Functionally, could be a nuclease involved in processing of the 5'-end of pre-16S rRNA. This chain is Putative pre-16S rRNA nuclease, found in Corynebacterium jeikeium (strain K411).